Consider the following 611-residue polypeptide: Menin (611 aa).

The interaction with FANCD2 stretch occupies residues 214-390; it reads GVAERSWLYL…SLLETGEERT (177 aa). The segment at 460 to 553 is disordered; it reads REAEAAEAEE…SPPPEGPVLT (94 aa). A compositionally biased stretch (basic and acidic residues) spans 484 to 500; that stretch reads RRESKPEEPPPPKKPAL. Phosphoserine is present on residues Ser487 and Ser544. The residue at position 595 (Thr595) is a Phosphothreonine.

In terms of assembly, component of the MLL-HCF complex, at least composed of KMT2A/MLL1, MEN1, ASH2L, RBBP5, DPY30, WDR5, HCFC1 and HCFC2. Component of the menin-associated histone methyltransferase complex, at least composed of KMT2B/MLL4, MEN1, ASH2L, RBBP5, DPY30 and WDR5. Interacts with POLR2B. Interacts with POLR2A phosphorylated at 'Ser-5', but not with the unphosphorylated, nor 'Ser-2' phosphorylated POLR2A forms. Interacts with FANCD2 and DBF4. Interacts with SMAD3, but not with SMAD2, nor SMAD4. Directly interacts with NFKB1, NFKB2 and RELA. Interacts with JUND (via MBM motif); inhibits the interaction of JUND with MAPK10 and the phosphorylation of JUND by MAP kinases MAPK8 and MAPK10. Interacts with KMT2A (via MBM motif). The KMT2A-MEN1 complex interacts with PSIP1 with a greater affinity as MEN1 enhances interaction of KMT2A with PSIP1. As to expression, widely expressed, with high levels in hippocampus, cerebral cortex, testis and thymus (at protein level). Also expressed at high levels in pancreatic islets, ovary and bone marrow. In the brain, highest expression in hippocampus pyramidal nerve cells (at protein level). In the testis, may be expressed in spermatogonia (at protein level). Low expression, if any, in skeletal muscle.

It is found in the nucleus. Its function is as follows. Essential component of a MLL/SET1 histone methyltransferase (HMT) complex, a complex that specifically methylates 'Lys-4' of histone H3 (H3K4). Functions as a transcriptional regulator. Binds to the TERT promoter and represses telomerase expression. Plays a role in TGFB1-mediated inhibition of cell-proliferation, possibly regulating SMAD3 transcriptional activity. Represses JUND-mediated transcriptional activation on AP1 sites, as well as that mediated by NFKB subunit RELA. Positively regulates HOXC8 and HOXC6 gene expression. May be involved in normal hematopoiesis through the activation of HOXA9 expression. May be involved in DNA repair. The sequence is that of Menin (Men1) from Mus musculus (Mouse).